We begin with the raw amino-acid sequence, 242 residues long: MNITVLTLFPEMFTALNHSIVARAQEEKRIELNYVNFRDYSTNRHGRVDDSPYGGGAGMLLMPQPIFDAIADLPEAKRRIIALTPTGRRFDQRLAEEWSKETDLVFLCGHYEGFDQRVHDELVTDEVSLGDFVLTGGELAAMTMIDATVRLLPDVLGKAASHEDDSFSTGLLEYPHYTRPADFRGLTVPEVLLSGNHARIETWRREQALRRTLERRPDLLETADLSETDRRYLQSISGLSND.

S-adenosyl-L-methionine-binding positions include G109 and 129–134; that span reads LGDFVL.

The protein belongs to the RNA methyltransferase TrmD family. In terms of assembly, homodimer.

The protein localises to the cytoplasm. It carries out the reaction guanosine(37) in tRNA + S-adenosyl-L-methionine = N(1)-methylguanosine(37) in tRNA + S-adenosyl-L-homocysteine + H(+). Functionally, specifically methylates guanosine-37 in various tRNAs. The protein is tRNA (guanine-N(1)-)-methyltransferase of Exiguobacterium sibiricum (strain DSM 17290 / CCUG 55495 / CIP 109462 / JCM 13490 / 255-15).